The following is a 419-amino-acid chain: DNA ligase (419 aa).

Residues 1 to 120 (MLNHFPGHCS…ARQKRGAHTN (120 aa)) form an NTD region. The AD domain stretch occupies residues 121-317 (RGMIPPMLVK…NYHSAHLAKL (197 aa)). Lysine 151 functions as the N6-AMP-lysine intermediate in the catalytic mechanism. ATP-binding residues include lysine 151, glutamate 203, and phenylalanine 232. Glutamate 203 contributes to the a divalent metal cation binding site. Residue glutamate 291 coordinates a divalent metal cation. ATP contacts are provided by isoleucine 294 and lysine 316. The OB domain stretch occupies residues 318–419 (KPLLDAEFIL…REPINVLEII (102 aa)).

This sequence belongs to the ATP-dependent DNA ligase family.

The protein resides in the virion. It catalyses the reaction ATP + (deoxyribonucleotide)n-3'-hydroxyl + 5'-phospho-(deoxyribonucleotide)m = (deoxyribonucleotide)n+m + AMP + diphosphate.. Functionally, very low-fidelity DNA ligase that seals nicks in double-stranded DNA during DNA repair. Together with the viral repair DNA polymerase X, fills the single nucleotide gaps generated by the AP endonuclease. It is not essential for viral replication and recombination. Displays a very low adenylation activity towards DNA with 3'-dideoxy- or 3'-amino-terminated nicks compared to regular nick DNA. The protein is DNA ligase of African swine fever virus (isolate Tick/South Africa/Pretoriuskop Pr4/1996) (ASFV).